The chain runs to 415 residues: Serine hydroxymethyltransferase (415 aa).

Residues Leu-121 and 125 to 127 (GHL) contribute to the (6S)-5,6,7,8-tetrahydrofolate site. At Lys-229 the chain carries N6-(pyridoxal phosphate)lysine.

Belongs to the SHMT family. As to quaternary structure, homodimer. Requires pyridoxal 5'-phosphate as cofactor.

Its subcellular location is the cytoplasm. It catalyses the reaction (6R)-5,10-methylene-5,6,7,8-tetrahydrofolate + glycine + H2O = (6S)-5,6,7,8-tetrahydrofolate + L-serine. It participates in one-carbon metabolism; tetrahydrofolate interconversion. Its pathway is amino-acid biosynthesis; glycine biosynthesis; glycine from L-serine: step 1/1. In terms of biological role, catalyzes the reversible interconversion of serine and glycine with tetrahydrofolate (THF) serving as the one-carbon carrier. This reaction serves as the major source of one-carbon groups required for the biosynthesis of purines, thymidylate, methionine, and other important biomolecules. Also exhibits THF-independent aldolase activity toward beta-hydroxyamino acids, producing glycine and aldehydes, via a retro-aldol mechanism. The protein is Serine hydroxymethyltransferase of Bordetella petrii (strain ATCC BAA-461 / DSM 12804 / CCUG 43448).